A 1711-amino-acid chain; its full sequence is Reverse gyrase (1711 aa).

The RG N-terminal-type zinc-finger motif lies at 1 to 39 (MKAVYREMCPNCWGRISDERLVMRNPCEECLDEPVHADS). Zn(2+)-binding residues include C9, C12, C27, and C30. ATP contacts are provided by residues Q89 and 106-113 (APTGMGKS). The Helicase ATP-binding domain maps to 93 to 256 (VKRLLKGRSF…RLKKQMSRYL (164 aa)). The short motif at 213 to 216 (DDVD) is the DEAD box element. The tract at residues 638–1711 (DLVRSALMIV…YSEIQRYVSG (1074 aa)) is topoisomerase I. Residues 642–805 (SALMIVESPN…NIKRIEFHEV (164 aa)) enclose the Toprim domain. A Mg(2+)-binding site is contributed by E648. The RG C-terminal-type zinc-finger motif lies at 722-751 (LKRCRDCGHQFVDWEKKGVCPRCGSTNVRD). Residues C725, C728, C741, and C744 each coordinate Zn(2+). D774 is a Mg(2+) binding site. Positions 821–1709 (NENRVNAQIV…ELYSEIQRYV (889 aa)) constitute a Topo IA-type catalytic domain. The DOD-type homing endonuclease domain occupies 1160-1287 (VFGLVLGDGT…LSVYLYQIGI (128 aa)). Y1452 acts as the O-(5'-phospho-DNA)-tyrosine intermediate in catalysis.

This sequence in the N-terminal section; belongs to the DEAD box helicase family. DDVD subfamily. The protein in the C-terminal section; belongs to the type IA topoisomerase family. As to quaternary structure, monomer. Zn(2+) is required as a cofactor. Requires Mg(2+) as cofactor. This protein undergoes a protein self splicing that involves a post-translational excision of the intervening region (intein) followed by peptide ligation.

The protein localises to the cytoplasm. The enzyme catalyses ATP + H2O = ADP + phosphate + H(+). In terms of biological role, modifies the topological state of DNA by introducing positive supercoils in an ATP-dependent process, increasing the linking number in steps of +1. Binds to single-stranded DNA, transiently cleaves and then rejoins the ends, introducing a positive supercoil in the process. The scissile phosphodiester is attacked by the catalytic tyrosine of the enzyme, resulting in the formation of a DNA-(5'-phosphotyrosyl)-enzyme intermediate. Probably involved in rewinding DNA strands in regions of the chromosome that have opened up to allow replication, transcription, DNA repair and/or for DNA protection. The sequence is that of Reverse gyrase from Thermococcus kodakarensis (strain ATCC BAA-918 / JCM 12380 / KOD1) (Pyrococcus kodakaraensis (strain KOD1)).